We begin with the raw amino-acid sequence, 224 residues long: Biosynthetic peptidoglycan transglycosylase (224 aa).

Residues Ile-12–Val-32 traverse the membrane as a helical segment.

The protein belongs to the glycosyltransferase 51 family.

The protein localises to the cell inner membrane. The enzyme catalyses [GlcNAc-(1-&gt;4)-Mur2Ac(oyl-L-Ala-gamma-D-Glu-L-Lys-D-Ala-D-Ala)](n)-di-trans,octa-cis-undecaprenyl diphosphate + beta-D-GlcNAc-(1-&gt;4)-Mur2Ac(oyl-L-Ala-gamma-D-Glu-L-Lys-D-Ala-D-Ala)-di-trans,octa-cis-undecaprenyl diphosphate = [GlcNAc-(1-&gt;4)-Mur2Ac(oyl-L-Ala-gamma-D-Glu-L-Lys-D-Ala-D-Ala)](n+1)-di-trans,octa-cis-undecaprenyl diphosphate + di-trans,octa-cis-undecaprenyl diphosphate + H(+). The protein operates within cell wall biogenesis; peptidoglycan biosynthesis. In terms of biological role, peptidoglycan polymerase that catalyzes glycan chain elongation from lipid-linked precursors. This chain is Biosynthetic peptidoglycan transglycosylase, found in Brucella suis biovar 1 (strain 1330).